The sequence spans 384 residues: Histidinol-phosphate aminotransferase 2 (384 aa).

Lys-236 is modified (N6-(pyridoxal phosphate)lysine).

The protein belongs to the class-II pyridoxal-phosphate-dependent aminotransferase family. Histidinol-phosphate aminotransferase subfamily. Homodimer. The cofactor is pyridoxal 5'-phosphate.

The enzyme catalyses L-histidinol phosphate + 2-oxoglutarate = 3-(imidazol-4-yl)-2-oxopropyl phosphate + L-glutamate. Its pathway is amino-acid biosynthesis; L-histidine biosynthesis; L-histidine from 5-phospho-alpha-D-ribose 1-diphosphate: step 7/9. The polypeptide is Histidinol-phosphate aminotransferase 2 (hisC2) (Nostoc sp. (strain PCC 7120 / SAG 25.82 / UTEX 2576)).